Reading from the N-terminus, the 1792-residue chain is Eukaryotic translation initiation factor 4G (1792 aa).

The span at methionine 1–alanine 12 shows a compositional bias: basic and acidic residues. Disordered regions lie at residues methionine 1–proline 285, aspartate 424–serine 446, serine 491–valine 590, asparagine 612–lysine 659, glycine 678–histidine 761, valine 874–arginine 912, serine 960–tryptophan 993, methionine 999–glycine 1018, glycine 1275–glutamate 1299, tryptophan 1407–threonine 1503, and glutamate 1537–serine 1600. Positions phenylalanine 21 to serine 42 are enriched in gly residues. A compositionally biased stretch (pro residues) spans proline 88 to arginine 107. Polar residues-rich tracts occupy residues arginine 147–glycine 156 and serine 179–proline 191. Composition is skewed to low complexity over residues proline 216 to glutamine 243, proline 263 to asparagine 278, and proline 432 to serine 442. Residues serine 491 to threonine 517 are compositionally biased toward polar residues. Basic and acidic residues-rich tracts occupy residues aspartate 545–glutamate 564, lysine 571–proline 587, and aspartate 633–arginine 643. The span at asparagine 644–serine 654 shows a compositional bias: polar residues. Positions alanine 699–glutamate 718 are enriched in low complexity. Over residues alanine 964–leucine 990 the composition is skewed to basic and acidic residues. An EIF4E-binding region spans residues glycine 1018–leucine 1030. The 224-residue stretch at glutamine 1183–lysine 1406 folds into the MIF4G domain. A compositionally biased stretch (acidic residues) spans glutamate 1278–glycine 1289. 2 stretches are compositionally biased toward basic and acidic residues: residues glutamate 1290–glutamate 1299 and arginine 1411–alanine 1432. 2 stretches are compositionally biased toward low complexity: residues arginine 1439–glycine 1450 and serine 1461–serine 1470. Composition is skewed to basic and acidic residues over residues isoleucine 1490–threonine 1503 and alanine 1559–glycine 1572. Residues proline 1576–arginine 1593 are compositionally biased toward polar residues. Residues aspartate 1603–glutamate 1727 enclose the MI domain.

The protein belongs to the eukaryotic initiation factor 4G family. In terms of assembly, EIF4F is a multi-subunit complex, the composition of which varies with external and internal environmental conditions. It is composed of at least EIF4A, EIF4E and EIF4G. In higher plants two isoforms of EIF4F have been identified, named isoform EIF4F and isoform EIF(iso)4F. Isoform EIF4F has subunits p220 and p26, whereas isoform EIF(iso)4F has subunits p82 and p28.

Component of the protein complex eIF4F, which is involved in the recognition of the mRNA cap, ATP-dependent unwinding of 5'-terminal secondary structure and recruitment of mRNA to the ribosome. This chain is Eukaryotic translation initiation factor 4G, found in Oryza sativa subsp. japonica (Rice).